A 38-amino-acid polypeptide reads, in one-letter code: Large ribosomal subunit protein bL36 (38 aa).

This sequence belongs to the bacterial ribosomal protein bL36 family.

The chain is Large ribosomal subunit protein bL36 from Anaeromyxobacter dehalogenans (strain 2CP-1 / ATCC BAA-258).